The following is a 289-amino-acid chain: Glyceraldehyde-3-phosphate dehydrogenase (289 aa).

NAD(+)-binding residues include Asp12 and Arg57. D-glyceraldehyde 3-phosphate contacts are provided by residues 128 to 130 (SCT), Thr159, 188 to 189 (TG), and Arg211. Cys129 acts as the Nucleophile in catalysis.

Belongs to the glyceraldehyde-3-phosphate dehydrogenase family. Homotetramer.

Its subcellular location is the cytoplasm. The catalysed reaction is D-glyceraldehyde 3-phosphate + phosphate + NAD(+) = (2R)-3-phospho-glyceroyl phosphate + NADH + H(+). It functions in the pathway carbohydrate degradation; glycolysis; pyruvate from D-glyceraldehyde 3-phosphate: step 1/5. The chain is Glyceraldehyde-3-phosphate dehydrogenase (GPD) from Amanita muscaria (Fly agaric).